The primary structure comprises 324 residues: MKLAFIIDPIHQLDPCHDTSVALMEAAQILGHEVWVTQANWLSVVDSKAWAILQQVELVPVQLIDGRWVAASPWYTLNTRSFSSLETMDAVFMRTDPPVNDAYLYATYVLDYVDQRKTLVINNPNGIRGANEKMYALQFTKAIPETIVSADKDFIRQFVEAKGATVLKPLGNKAGEGILFLQAGDRNFNSIVELSTQQGRLPVMVQTYLPEAKEGDKRIILLNGEPIGALNRLASGSDFRNNMATGGTVAKTEITPREEEICSQIAANLRQDGLIFVGIDVIGGYLTEVNVTSPTGIREIDRLDGTRLAHQVIQWVEKNLQIQN.

The region spanning 133–317 (KMYALQFTKA…LAHQVIQWVE (185 aa)) is the ATP-grasp domain. 159-215 (VEAKGATVLKPLGNKAGEGILFLQAGDRNFNSIVELSTQQGRLPVMVQTYLPEAKEG) is a binding site for ATP. Mg(2+)-binding residues include Glu-288 and Asn-290.

It belongs to the prokaryotic GSH synthase family. The cofactor is Mg(2+). Mn(2+) is required as a cofactor.

It catalyses the reaction gamma-L-glutamyl-L-cysteine + glycine + ATP = glutathione + ADP + phosphate + H(+). It participates in sulfur metabolism; glutathione biosynthesis; glutathione from L-cysteine and L-glutamate: step 2/2. In Nostoc sp. (strain PCC 7120 / SAG 25.82 / UTEX 2576), this protein is Glutathione synthetase.